The sequence spans 71 residues: Conotoxin De13.1 (71 aa).

The first 19 residues, 1–19 (MSGMGVLLLVLLLVMPLAA), serve as a signal peptide directing secretion. Residues 20-35 (FHQDGEGEATRRSGGL) constitute a propeptide that is removed on maturation. A 4-hydroxyproline mark is found at Pro40 and Pro44. Trp51 carries the 6'-bromotryptophan modification. Glu52 is modified (4-carboxyglutamate). Position 55 is a 5-hydroxylysine (Lys55). Residue Pro58 is modified to 4-hydroxyproline. A Histidine amide modification is found at His69.

The protein belongs to the conotoxin G superfamily. Post-translationally, contains 4 disulfide bonds. As to expression, expressed by the venom duct.

The protein resides in the secreted. This is Conotoxin De13.1 from Conasprella delessertii (Sozon's cone).